A 601-amino-acid chain; its full sequence is Elongation factor 4 (601 aa).

A tr-type G domain is found at 5–187; that stretch reads EHIRNFSIIA…AIVERLPAPE (183 aa). GTP contacts are provided by residues 17–22 and 134–137; these read DHGKST and NKID.

Belongs to the TRAFAC class translation factor GTPase superfamily. Classic translation factor GTPase family. LepA subfamily.

The protein resides in the cell inner membrane. The catalysed reaction is GTP + H2O = GDP + phosphate + H(+). Functionally, required for accurate and efficient protein synthesis under certain stress conditions. May act as a fidelity factor of the translation reaction, by catalyzing a one-codon backward translocation of tRNAs on improperly translocated ribosomes. Back-translocation proceeds from a post-translocation (POST) complex to a pre-translocation (PRE) complex, thus giving elongation factor G a second chance to translocate the tRNAs correctly. Binds to ribosomes in a GTP-dependent manner. The protein is Elongation factor 4 of Nitratidesulfovibrio vulgaris (strain ATCC 29579 / DSM 644 / CCUG 34227 / NCIMB 8303 / VKM B-1760 / Hildenborough) (Desulfovibrio vulgaris).